Here is a 224-residue protein sequence, read N- to C-terminus: Large ribosomal subunit protein uL4 (224 aa).

A disordered region spans residues 52-109; that stretch reads AAARQGTHSTKTRGDVSGGGRKPYRQKGTGRARQGSTRTPQFTGGGVVHGPKPRDYSQ.

The protein belongs to the universal ribosomal protein uL4 family. Part of the 50S ribosomal subunit.

Functionally, one of the primary rRNA binding proteins, this protein initially binds near the 5'-end of the 23S rRNA. It is important during the early stages of 50S assembly. It makes multiple contacts with different domains of the 23S rRNA in the assembled 50S subunit and ribosome. Its function is as follows. Forms part of the polypeptide exit tunnel. This is Large ribosomal subunit protein uL4 from Mycobacterium ulcerans (strain Agy99).